A 295-amino-acid chain; its full sequence is MSIDINNRLYTALVTPMFEDGSIDWISFEKLLKTQEYYECGVLILGSTGEALSLDFDEQCEVVRFVTNLNLSVPIMVGVGGFQLAKQLQWIEFCQTQRVDCFLVVTPLYTKPGAASQTGWFKAVLDKAERPCMLYNVPSRTGINLAEEVLTSLKKHPNLWALKEASGDIQRCARYHDLAPNLVIYSGEDGLLPELADVGARGLVSVISNVWPEQTKKYVRQSLAHEITVEDKAVWEAATRSCFSVANPIPVKVWLAHNSLITTNTLRAPLLADELQDLSLLISADSLVKDWFSHI.

Thr-48 lines the pyruvate pocket. Tyr-135 (proton donor/acceptor) is an active-site residue. Lys-163 functions as the Schiff-base intermediate with substrate in the catalytic mechanism. Val-204 contributes to the pyruvate binding site.

Belongs to the DapA family. As to quaternary structure, homotetramer; dimer of dimers.

The protein localises to the cytoplasm. The catalysed reaction is L-aspartate 4-semialdehyde + pyruvate = (2S,4S)-4-hydroxy-2,3,4,5-tetrahydrodipicolinate + H2O + H(+). Its pathway is amino-acid biosynthesis; L-lysine biosynthesis via DAP pathway; (S)-tetrahydrodipicolinate from L-aspartate: step 3/4. Its function is as follows. Catalyzes the condensation of (S)-aspartate-beta-semialdehyde [(S)-ASA] and pyruvate to 4-hydroxy-tetrahydrodipicolinate (HTPA). This chain is 4-hydroxy-tetrahydrodipicolinate synthase, found in Francisella tularensis subsp. novicida (strain U112).